We begin with the raw amino-acid sequence, 516 residues long: Probable cytosol aminopeptidase (516 aa).

Mn(2+)-binding residues include Lys288 and Asp293. Lys300 is an active-site residue. The Mn(2+) site is built by Asp311, Asp370, and Glu372. Arg374 is an active-site residue.

This sequence belongs to the peptidase M17 family. Mn(2+) is required as a cofactor.

It is found in the cytoplasm. The enzyme catalyses Release of an N-terminal amino acid, Xaa-|-Yaa-, in which Xaa is preferably Leu, but may be other amino acids including Pro although not Arg or Lys, and Yaa may be Pro. Amino acid amides and methyl esters are also readily hydrolyzed, but rates on arylamides are exceedingly low.. The catalysed reaction is Release of an N-terminal amino acid, preferentially leucine, but not glutamic or aspartic acids.. In terms of biological role, presumably involved in the processing and regular turnover of intracellular proteins. Catalyzes the removal of unsubstituted N-terminal amino acids from various peptides. This Cupriavidus taiwanensis (strain DSM 17343 / BCRC 17206 / CCUG 44338 / CIP 107171 / LMG 19424 / R1) (Ralstonia taiwanensis (strain LMG 19424)) protein is Probable cytosol aminopeptidase.